A 734-amino-acid polypeptide reads, in one-letter code: MELRFPRFSQGLAQDPTTRRIWFGIATAHDFESHDDITEERLYQNIFASHFGQLAIIFLWTSGNLFHVAWQGNFESWIQDPLHVRPIAHAIWDPHFGQPAVEAFTRGGAAGPVNIAYSGVYQWWYTIGLRTNEDLYTGALFLLFLSTLSLVAGWLHLQPKWKPSLSWFKNAESRLNHHLSGLFGVSSLAWTGHLVHVAIPASRGEYVRWNNFLDVLPYPQGLGPLLTGQWNLYAQNPDSSNHLFGTAQGAGTAILTLLGGFHPQTQSLWLTDIAHHHLAIAFIFLIAGHMYRTNFGIGHSIKDLLEAHTPPGGRLGRGHKGLYDTINNSIHFQLGLALASLGVITSLVAQHMYSLPAYAFIAQDFTTQAALYTHHQYIAGFIMTGAFAHGAIFFIRDYNPEQNEDNVLARMLDHKEAIISHLSWASLFLGFHTLGLYVHNDVMLAFGTPEKQILIEPIFAQWIQSAHGKTTYGFDILLSSTNGPAFNAGRSLWLPGWLNAVNENSNSLFLTIGPGDFLVHHAIALGLHTTTLILVKGALDARGSKLMPDKKDFGYSFPCDGPGRGGTCDISAWDAFYLAVFWMLNTIGWVTFYWHWKHITLWQGNVSQFNESSTYLMGWLRDYLWLNSSQLINGYNPFGMNSLSVWAWMFLFGHLVWATGFMFLISWRGYWQELIETLAWAHERTPLANLIRWRDKPVALSIVQARLVGLAHFSVGYIFTYAAFLIASTSGKFG.

The next 8 membrane-spanning stretches (helical) occupy residues 46–69 (IFAS…FHVA), 135–158 (LYTG…LHLQ), 175–199 (LNHH…HVAI), 273–291 (IAHH…GHMY), 330–353 (IHFQ…QHMY), 369–395 (AALY…IFFI), 417–439 (AIIS…LYVH), and 517–535 (FLVH…LILV). [4Fe-4S] cluster is bound by residues Cys559 and Cys568. 2 helical membrane-spanning segments follow: residues 575–596 (AFYL…YWHW) and 643–665 (LSVW…MFLI). Residues His654, Met662, and Tyr670 each contribute to the chlorophyll a site. A phylloquinone-binding site is contributed by Trp671. A helical transmembrane segment spans residues 707–727 (LVGLAHFSVGYIFTYAAFLIA).

It belongs to the PsaA/PsaB family. In terms of assembly, the PsaA/B heterodimer binds the P700 chlorophyll special pair and subsequent electron acceptors. PSI consists of a core antenna complex that captures photons, and an electron transfer chain that converts photonic excitation into a charge separation. The eukaryotic PSI reaction center is composed of at least 11 subunits. P700 is a chlorophyll a/chlorophyll a' dimer, A0 is one or more chlorophyll a, A1 is one or both phylloquinones and FX is a shared 4Fe-4S iron-sulfur center. serves as cofactor.

The protein localises to the plastid. The protein resides in the chloroplast thylakoid membrane. The enzyme catalyses reduced [plastocyanin] + hnu + oxidized [2Fe-2S]-[ferredoxin] = oxidized [plastocyanin] + reduced [2Fe-2S]-[ferredoxin]. Its function is as follows. PsaA and PsaB bind P700, the primary electron donor of photosystem I (PSI), as well as the electron acceptors A0, A1 and FX. PSI is a plastocyanin-ferredoxin oxidoreductase, converting photonic excitation into a charge separation, which transfers an electron from the donor P700 chlorophyll pair to the spectroscopically characterized acceptors A0, A1, FX, FA and FB in turn. Oxidized P700 is reduced on the lumenal side of the thylakoid membrane by plastocyanin. This chain is Photosystem I P700 chlorophyll a apoprotein A2, found in Agrostis stolonifera (Creeping bentgrass).